The following is an 86-amino-acid chain: Large ribosomal subunit protein bL27 (86 aa).

The interval 1-24 (MAHKKAGGSTRNGRDSESKRLGVK) is disordered.

Belongs to the bacterial ribosomal protein bL27 family.

The sequence is that of Large ribosomal subunit protein bL27 from Alcanivorax borkumensis (strain ATCC 700651 / DSM 11573 / NCIMB 13689 / SK2).